The chain runs to 315 residues: Tyrosine recombinase XerC (315 aa).

The region spanning 13–104 is the Core-binding (CB) domain; that stretch reads ADLAAAREEW…GVRSLLRHLE (92 aa). Residues 125 to 309 enclose the Tyr recombinase domain; it reads SLPKPLTADD…DTQRLLEVYD (185 aa). Residues Arg168, Lys193, His261, Arg264, and His287 contribute to the active site. Catalysis depends on Tyr296, which acts as the O-(3'-phospho-DNA)-tyrosine intermediate.

The protein belongs to the 'phage' integrase family. XerC subfamily. As to quaternary structure, forms a cyclic heterotetrameric complex composed of two molecules of XerC and two molecules of XerD.

It is found in the cytoplasm. Functionally, site-specific tyrosine recombinase, which acts by catalyzing the cutting and rejoining of the recombining DNA molecules. The XerC-XerD complex is essential to convert dimers of the bacterial chromosome into monomers to permit their segregation at cell division. It also contributes to the segregational stability of plasmids. The chain is Tyrosine recombinase XerC from Brucella melitensis biotype 1 (strain ATCC 23456 / CCUG 17765 / NCTC 10094 / 16M).